A 719-amino-acid chain; its full sequence is Polyribonucleotide nucleotidyltransferase (719 aa).

The Mg(2+) site is built by aspartate 487 and aspartate 493. A KH domain is found at 554 to 613 (PRIETFKIATDKIREVIGTGGKVIREIVEKTGAKVNIEDDGTVKVASSDGEAMKAAIKWI). The S1 motif domain occupies 623-691 (GQIYDGTVVK…DRGKTRLSMK (69 aa)). Positions 691-719 (KVVDQTTGEDLEAKQKDAPAEAPREAAGE) are disordered. Residues 701–719 (LEAKQKDAPAEAPREAAGE) are compositionally biased toward basic and acidic residues.

This sequence belongs to the polyribonucleotide nucleotidyltransferase family. Mg(2+) serves as cofactor.

It localises to the cytoplasm. It carries out the reaction RNA(n+1) + phosphate = RNA(n) + a ribonucleoside 5'-diphosphate. In terms of biological role, involved in mRNA degradation. Catalyzes the phosphorolysis of single-stranded polyribonucleotides processively in the 3'- to 5'-direction. The chain is Polyribonucleotide nucleotidyltransferase from Bradyrhizobium sp. (strain ORS 278).